Reading from the N-terminus, the 1166-residue chain is Myosin-1 (1166 aa).

Residues 1–13 (MSQKVTPFMQSLK) show a composition bias toward polar residues. Residues 1–71 (MSQKVTPFMQ…AGDSEDSPYS (71 aa)) form a disordered region. At S14 the chain carries Phosphoserine. Over residues 32 to 45 (NSSGASVRLTNSNV) the composition is skewed to polar residues. Residues 112 to 161 (KKILQSWIQLPNGNWELGKILSTSGEESVISLPEGKVIKVISETLVPANP) enclose the Myosin N-terminal SH3-like domain. The Myosin motor domain maps to 165 to 837 (DGVDDLMQLS…QIGVLEDTRN (673 aa)). ATP is bound by residues 256–263 (GESGAGKT) and 304–312 (NDNSSRFGK). 2 actin-binding regions span residues 589–623 (LFEK…KQHL) and 717–739 (LFQL…KPNN). 4 consecutive IQ domains span residues 839–868 (TLHG…GISI), 862–891 (LKRG…RHKA), 888–917 (RHKA…ASVV), and 911–940 (IADA…LKSG). The stretch at 955–1005 (SVLSELQRRVLKAEAALREKEEENDILQQRLQQYENRWSEYETKMKSMEEI) forms a coiled coil. The interval 1030 to 1065 (ARNSDASVNASDATDWDSSSNQFRSQTSNGVGSRLQ) is disordered. Residues 1032–1060 (NSDASVNASDATDWDSSSNQFRSQTSNGV) are compositionally biased toward polar residues.

It belongs to the TRAFAC class myosin-kinesin ATPase superfamily. Myosin family. Plant myosin class VIII subfamily. As to quaternary structure, homodimer.

Its subcellular location is the cell junction. It is found in the plasmodesma. It localises to the cytoplasm. The protein localises to the cytoskeleton. The protein resides in the phragmoplast. Its subcellular location is the endosome. It is found in the endoplasmic reticulum. Myosin heavy chain that is required for the cell cycle-regulated transport of various organelles and proteins for their segregation. Functions by binding with its tail domain to receptor proteins on organelles and exerting force with its N-terminal motor domain against actin filaments, thereby transporting its cargo along polarized actin cables. Involved in endocytosis via its action in endosomal trafficking. The chain is Myosin-1 (VIII-1) from Arabidopsis thaliana (Mouse-ear cress).